A 232-amino-acid chain; its full sequence is Phosphatidylserine decarboxylase proenzyme (232 aa).

S190 serves as the catalytic Schiff-base intermediate with substrate; via pyruvic acid. A Pyruvic acid (Ser); by autocatalysis modification is found at S190.

This sequence belongs to the phosphatidylserine decarboxylase family. PSD-A subfamily. In terms of assembly, heterodimer of a large membrane-associated beta subunit and a small pyruvoyl-containing alpha subunit. The cofactor is pyruvate. Post-translationally, is synthesized initially as an inactive proenzyme. Formation of the active enzyme involves a self-maturation process in which the active site pyruvoyl group is generated from an internal serine residue via an autocatalytic post-translational modification. Two non-identical subunits are generated from the proenzyme in this reaction, and the pyruvate is formed at the N-terminus of the alpha chain, which is derived from the carboxyl end of the proenzyme. The post-translation cleavage follows an unusual pathway, termed non-hydrolytic serinolysis, in which the side chain hydroxyl group of the serine supplies its oxygen atom to form the C-terminus of the beta chain, while the remainder of the serine residue undergoes an oxidative deamination to produce ammonia and the pyruvoyl prosthetic group on the alpha chain.

The protein localises to the cell membrane. The catalysed reaction is a 1,2-diacyl-sn-glycero-3-phospho-L-serine + H(+) = a 1,2-diacyl-sn-glycero-3-phosphoethanolamine + CO2. Its pathway is phospholipid metabolism; phosphatidylethanolamine biosynthesis; phosphatidylethanolamine from CDP-diacylglycerol: step 2/2. In terms of biological role, catalyzes the formation of phosphatidylethanolamine (PtdEtn) from phosphatidylserine (PtdSer). This is Phosphatidylserine decarboxylase proenzyme from Beijerinckia indica subsp. indica (strain ATCC 9039 / DSM 1715 / NCIMB 8712).